The sequence spans 203 residues: SOSS complex subunit B1-A (203 aa).

The segment at residues 22–92 (IVLETGRVTK…TLYTGRGGDL (71 aa)) is a DNA-binding region (OB). Residues 110–203 (EPNPEYIAQQ…GKESRRTGKR (94 aa)) are disordered. Residues 118-140 (QQSQSKQGQQESGTGTNNHNSSS) are compositionally biased toward low complexity. Positions 149 to 182 (ENGNGSNSSGPPAHQSTAPAHSASGRITRSQPNH) are enriched in polar residues.

This sequence belongs to the SOSS-B family. SOSS-B1 subfamily. In terms of assembly, component of the SOSS complex, composed of soss-b (soss-b1/nabp2 or soss-b2/nabp1), soss-a/ints3 and soss-c/inip. SOSS complexes containing soss-b1/nabp2 are more abundant than complexes containing soss-b2/nabp1.

The protein localises to the nucleus. Its function is as follows. Component of the SOSS complex, a multiprotein complex that functions downstream of the MRN complex to promote DNA repair and G2/M checkpoint. In the SOSS complex, acts as a sensor of single-stranded DNA that binds to single-stranded DNA. The SOSS complex associates with DNA lesions and influences diverse endpoints in the cellular DNA damage response including cell-cycle checkpoint activation, recombinational repair and maintenance of genomic stability. Required for efficient homologous recombination-dependent repair of double-strand breaks (DSBs). This is SOSS complex subunit B1-A (nabp2-a) from Xenopus laevis (African clawed frog).